The chain runs to 331 residues: Anthranilate phosphoribosyltransferase (331 aa).

Residues glycine 81, 84–85, serine 89, 91–94, 109–117, and serine 121 contribute to the 5-phospho-alpha-D-ribose 1-diphosphate site; these read GD, NCST, and KHGNRAVSS. Glycine 81 provides a ligand contact to anthranilate. Serine 93 is a Mg(2+) binding site. Asparagine 112 is a binding site for anthranilate. Arginine 167 lines the anthranilate pocket. The Mg(2+) site is built by aspartate 226 and glutamate 227.

This sequence belongs to the anthranilate phosphoribosyltransferase family. As to quaternary structure, homodimer. Requires Mg(2+) as cofactor.

The catalysed reaction is N-(5-phospho-beta-D-ribosyl)anthranilate + diphosphate = 5-phospho-alpha-D-ribose 1-diphosphate + anthranilate. It functions in the pathway amino-acid biosynthesis; L-tryptophan biosynthesis; L-tryptophan from chorismate: step 2/5. Functionally, catalyzes the transfer of the phosphoribosyl group of 5-phosphorylribose-1-pyrophosphate (PRPP) to anthranilate to yield N-(5'-phosphoribosyl)-anthranilate (PRA). This chain is Anthranilate phosphoribosyltransferase, found in Oleidesulfovibrio alaskensis (strain ATCC BAA-1058 / DSM 17464 / G20) (Desulfovibrio alaskensis).